The primary structure comprises 179 residues: Large ribosomal subunit protein uL6 (179 aa).

It belongs to the universal ribosomal protein uL6 family. Part of the 50S ribosomal subunit.

This protein binds to the 23S rRNA, and is important in its secondary structure. It is located near the subunit interface in the base of the L7/L12 stalk, and near the tRNA binding site of the peptidyltransferase center. The polypeptide is Large ribosomal subunit protein uL6 (Halothermothrix orenii (strain H 168 / OCM 544 / DSM 9562)).